Consider the following 308-residue polypeptide: Ribosomal RNA large subunit methyltransferase F (308 aa).

It belongs to the methyltransferase superfamily. METTL16/RlmF family.

The protein resides in the cytoplasm. The enzyme catalyses adenosine(1618) in 23S rRNA + S-adenosyl-L-methionine = N(6)-methyladenosine(1618) in 23S rRNA + S-adenosyl-L-homocysteine + H(+). Functionally, specifically methylates the adenine in position 1618 of 23S rRNA. The sequence is that of Ribosomal RNA large subunit methyltransferase F from Shigella boydii serotype 18 (strain CDC 3083-94 / BS512).